The sequence spans 1027 residues: MDTFNVPMLAESSNTNYATEATSNHHHLQHQHQQQHSHQQQQQQQLLMPHHHKDQMLAAGSSPMLPFYSHLQLQQKDATATIGPAAAAAAVEAATTSANADNFSSLQTIDASQLDGGISLSGLCDRFFVASPNPHSNSNMTLMGTATAATTTTTNNNNNNNTNNNNNNNVEAKTVRPSNGNSVIIESVTMPSFANILFPTHRSANECIDPALLQKNPQNPNGNNSSIIVPPVEYHQLKPLEVNSSTSVSTSNFLSSTTAQLLDFEVQVGKDDGHISTTTTTGPGSGSASGSGSGSGSGSGSIARTIGTATPTTTTSMSNTANPTRSSLHSIEELAASSCAPRAASPNSNHTSSASTTPQQQQQQQHHMQSGNHSGSNLSSDDESMSEDEFGLEIDDNGGYQDTTSSHSQQSGGGGGGGGGNLLNGSSGGSSAGGGYMLLPQAASSSGNNGNPNAGHMSSGSVGNGSGGAGNGGAGGNSGPGNPMGGTSATPGHGGEVIDFKHLFEELCPVCGDKVSGYHYGLLTCESCKGFFKRTVQNKKVYTCVAERSCHIDKTQRKRCPYCRFQKCLEVGMKLEAVRADRMRGGRNKFGPMYKRDRARKLQVMRQRQLALQALRNSMGPDIKPTPISPGYQQAYPNMNIKQEIQIPQVSSLTQSPDSSPSPIAIALGQVNASTGGVIATPMNAGTGGSGGGGLNGPSSVGNGNSSNGSSNGNNNSSTGNGTSGGGGGNNAGGGGGGTNSNDGLHRNGGNGNSSCHEAGIGSLQNTADSKLCFDSGTHPSSTADALIEPLRVSPMIREFVQSIDDREWQTQLFALLQKQTYNQVEVDLFELMCKVLDQNLFSQVDWARNTVFFKDLKVDDQMKLLQHSWSDMLVLDHLHHRIHNGLPDETQLNNGQVFNLMSLGLLGVPQLGDYFNELQNKLQDLKFDMGDYVCMKFLILLNPSVRGIVNRKTVSEGHDNVQAALLDYTLTCYPSVNDKFRGLVNILPEIHAMAVRGEDHLYTKHCAGSAPTQTLLMEMLHAKRKG.

Disordered regions lie at residues 20–48 (EATSNHHHLQHQHQQQHSHQQQQQQQLLM), 273–427 (GHIS…NGSS), and 443–493 (ASSS…TPGH). Residues 24 to 35 (NHHHLQHQHQQQ) show a composition bias toward basic residues. Positions 36-48 (HSHQQQQQQQLLM) are enriched in low complexity. Positions 283 to 299 (PGSGSASGSGSGSGSGS) are enriched in gly residues. Composition is skewed to low complexity over residues 300–324 (GSIARTIGTATPTTTTSMSNTANPT) and 335–349 (AASSCAPRAASPNSN). Residues 380–396 (SDDESMSEDEFGLEIDD) show a composition bias toward acidic residues. The span at 411–427 (SGGGGGGGGGNLLNGSS) shows a compositional bias: gly residues. Residues 443 to 461 (ASSSGNNGNPNAGHMSSGS) are compositionally biased toward low complexity. Gly residues predominate over residues 462 to 484 (VGNGSGGAGNGGAGGNSGPGNPM). A DNA-binding region (nuclear receptor) is located at residues 505-580 (EELCPVCGDK…VGMKLEAVRA (76 aa)). NR C4-type zinc fingers lie at residues 508-528 (CPVCGDKVSGYHYGLLTCESC) and 544-568 (CVAERSCHIDKTQRKRCPYCRFQKC). The segment at 682–756 (PMNAGTGGSG…RNGGNGNSSC (75 aa)) is disordered. Positions 686-696 (GTGGSGGGGLN) are enriched in gly residues. Low complexity predominate over residues 697–721 (GPSSVGNGNSSNGSSNGNNNSSTGN). Residues 722–739 (GTSGGGGGNNAGGGGGGT) show a composition bias toward gly residues. The NR LBD domain maps to 792–1024 (RVSPMIREFV…TLLMEMLHAK (233 aa)).

Belongs to the nuclear hormone receptor family. NR5 subfamily. As to quaternary structure, monomer; forms a complex with ftz. In terms of tissue distribution, expression in the parasegmental primordia of the embryonic blastoderm.

Its subcellular location is the nucleus. Functionally, acts as a cofactor to fushi tarazu (ftz). Facilitates the binding of ftz to DNA. Binds the sequence element 5'-YCYYGGYCR-3' in the zebra element of ftz. Probably functions as a nuclear receptor for a yet unknown ligand. In contrast to vertebrate homologs, not activated by phospholipids. The chain is Nuclear hormone receptor FTZ-F1 (ftz-f1) from Drosophila melanogaster (Fruit fly).